An 806-amino-acid chain; its full sequence is Centrosomal protein of 85 kDa-like (806 aa).

Disordered regions lie at residues 1 to 27, 51 to 89, and 101 to 146; these read MWGR…AGSD, NNHL…LSFK, and HVMP…SSLD. Residue serine 15 is modified to Phosphoserine. The segment covering 60-74 has biased composition (polar residues); sequence TSDSGDTGIGTSCSD. The segment covering 135 to 146 has biased composition (basic and acidic residues); sequence DHSRGERDSSLD. Serine 207 is modified (phosphoserine). Positions 308-353 are disordered; sequence PLEGRTTDDSYSLAPWQQPQTEEFQQGSETPMQVLTGSSRQSYSPP. The span at 322–351 shows a compositional bias: polar residues; sequence PWQQPQTEEFQQGSETPMQVLTGSSRQSYS. The stretch at 442 to 644 forms a coiled coil; that stretch reads QEELEQKLAS…ILEIQSMQGK (203 aa).

The protein belongs to the CEP85 family.

Its subcellular location is the cytoplasm. It is found in the cytoskeleton. The protein resides in the microtubule organizing center. The protein localises to the centrosome. In terms of biological role, plays an essential role in neuronal cell migration. The chain is Centrosomal protein of 85 kDa-like from Mus musculus (Mouse).